The following is a 259-amino-acid chain: uncharacterized protein (259 aa).

H9, H11, E97, H133, H157, and D207 together coordinate a divalent metal cation.

Belongs to the metallo-dependent hydrolases superfamily. TatD-type hydrolase family. The cofactor is a divalent metal cation.

This is an uncharacterized protein from Escherichia coli (strain K12).